The chain runs to 395 residues: LIM/homeobox protein Lhx3 (395 aa).

LIM zinc-binding domains are found at residues 28 to 78 (CAGC…CKDD) and 87 to 141 (CAAC…CKAD). A DNA-binding region (homeobox) is located at residues 154-213 (AKRPRTTITAKQLETLKNAYNNSPKPARHVREQLSSETGLDMRVVQVWFQNRRAKEKRLK). 2 disordered regions span residues 208 to 304 (KEKR…QDQY) and 363 to 383 (GPSS…PVSP). The segment covering 257-278 (DEPSMSEMNHSNGIYNSLNDSS) has biased composition (polar residues).

As to quaternary structure, interacts with ldb1 and with the N-terminus of rnf12. As to expression, in dorsal regions at neural tube and tailbud stages and in adults predominantly in the pituitary gland and weakly in the eye and brain.

The protein localises to the nucleus. Its function is as follows. Transcription factor. May be involved in the specification and maintenance of differentiation of distinct neuronal and neuroendocrine tissues. Early marker for the pituitary and pineal lineages, it may be involved in specifying these lineages. The chain is LIM/homeobox protein Lhx3 (lhx3) from Xenopus laevis (African clawed frog).